Here is a 346-residue protein sequence, read N- to C-terminus: Phosphate acyltransferase (346 aa).

This sequence belongs to the PlsX family. As to quaternary structure, homodimer. Probably interacts with PlsY.

It is found in the cytoplasm. The enzyme catalyses a fatty acyl-[ACP] + phosphate = an acyl phosphate + holo-[ACP]. Its pathway is lipid metabolism; phospholipid metabolism. Its function is as follows. Catalyzes the reversible formation of acyl-phosphate (acyl-PO(4)) from acyl-[acyl-carrier-protein] (acyl-ACP). This enzyme utilizes acyl-ACP as fatty acyl donor, but not acyl-CoA. This Brucella abortus (strain S19) protein is Phosphate acyltransferase.